The primary structure comprises 554 residues: Dihydroxy-acid dehydratase (554 aa).

Cys48 serves as a coordination point for [2Fe-2S] cluster. Asp80 provides a ligand contact to Mg(2+). Cys121 contributes to the [2Fe-2S] cluster binding site. Residues Asp122 and Lys123 each contribute to the Mg(2+) site. At Lys123 the chain carries N6-carboxylysine. Cys193 is a [2Fe-2S] cluster binding site. Glu444 contributes to the Mg(2+) binding site. Catalysis depends on Ser470, which acts as the Proton acceptor.

The protein belongs to the IlvD/Edd family. Homodimer. Requires [2Fe-2S] cluster as cofactor. Mg(2+) is required as a cofactor.

The catalysed reaction is (2R)-2,3-dihydroxy-3-methylbutanoate = 3-methyl-2-oxobutanoate + H2O. It catalyses the reaction (2R,3R)-2,3-dihydroxy-3-methylpentanoate = (S)-3-methyl-2-oxopentanoate + H2O. It participates in amino-acid biosynthesis; L-isoleucine biosynthesis; L-isoleucine from 2-oxobutanoate: step 3/4. The protein operates within amino-acid biosynthesis; L-valine biosynthesis; L-valine from pyruvate: step 3/4. Functionally, functions in the biosynthesis of branched-chain amino acids. Catalyzes the dehydration of (2R,3R)-2,3-dihydroxy-3-methylpentanoate (2,3-dihydroxy-3-methylvalerate) into 2-oxo-3-methylpentanoate (2-oxo-3-methylvalerate) and of (2R)-2,3-dihydroxy-3-methylbutanoate (2,3-dihydroxyisovalerate) into 2-oxo-3-methylbutanoate (2-oxoisovalerate), the penultimate precursor to L-isoleucine and L-valine, respectively. This Tremblaya princeps protein is Dihydroxy-acid dehydratase.